A 315-amino-acid chain; its full sequence is Gamma-hemolysin component C (315 aa).

A signal peptide spans 1-29 (MLKNKILATTLSVSLLAPLANPLLENAKA).

This sequence belongs to the aerolysin family. Toxicity requires sequential binding and synergistic association of a class S and a class F component which form heterooligomeric complexes. HlgC (class S) associates with HlgB (class F) thus forming an CB toxin.

Functionally, toxin that seems to act by forming pores in the membrane of the cell. Has a hemolytic and a leucotoxic activity. The polypeptide is Gamma-hemolysin component C (hlgC) (Staphylococcus aureus (strain Mu50 / ATCC 700699)).